The chain runs to 110 residues: Large ribosomal subunit protein P2B (110 aa).

A compositionally biased stretch (low complexity) spans 73–88 (TPAAGGAAGAEATSAA). Positions 73–110 (TPAAGGAAGAEATSAAEEAKEEEAAEESDEDMGFGLFD) are disordered. The span at 91 to 104 (AKEEEAAEESDEDM) shows a compositional bias: acidic residues. At serine 100 the chain carries Phosphoserine.

This sequence belongs to the eukaryotic ribosomal protein P1/P2 family. Component of the large ribosomal subunit (LSU). Mature yeast ribosomes consist of a small (40S) and a large (60S) subunit. The 40S small subunit contains 1 molecule of ribosomal RNA (18S rRNA) and at least 33 different proteins. The large 60S subunit contains 3 rRNA molecules (25S, 5.8S and 5S rRNA) and at least 46 different proteins. The acidic ribosomal P-proteins form the stalk structure of the 60S subunit. They are organized as a pentameric complex in which uL10/P0 interacts with 2 heterodimers of P1 and P2 proteins.

The protein resides in the cytoplasm. Component of the ribosome, a large ribonucleoprotein complex responsible for the synthesis of proteins in the cell. The small ribosomal subunit (SSU) binds messenger RNAs (mRNAs) and translates the encoded message by selecting cognate aminoacyl-transfer RNA (tRNA) molecules. The large subunit (LSU) contains the ribosomal catalytic site termed the peptidyl transferase center (PTC), which catalyzes the formation of peptide bonds, thereby polymerizing the amino acids delivered by tRNAs into a polypeptide chain. The nascent polypeptides leave the ribosome through a tunnel in the LSU and interact with protein factors that function in enzymatic processing, targeting, and the membrane insertion of nascent chains at the exit of the ribosomal tunnel. This Schizosaccharomyces pombe (strain 972 / ATCC 24843) (Fission yeast) protein is Large ribosomal subunit protein P2B (rpp202).